The primary structure comprises 357 residues: Queuosine-tRNA galactosyltransferase (357 aa).

Belongs to the glycosyltransferase 2 family.

The protein localises to the cytoplasm. It carries out the reaction queuosine(34) in tRNA(Tyr) + UDP-alpha-D-galactose = O-5''-beta-D-galactosylqueuosine(34) in tRNA(Tyr) + UDP + H(+). In terms of biological role, glycosyltransferase that specifically catalyzes galactosylation of cytoplasmic tRNA(Tyr) modified with queuosine at position 34 (queuosine(34)). Galactosylates the cyclopentene hydroxyl group of queuosine(34) in tRNA(Tyr) to form galactosyl-queuosine(34). Mannosylation of queuosine(34) in tRNA(Tyr) is required to slow-down elongation at cognate codons UAC and suppress stop codon readthrough, thereby regulating protein translation. The chain is Queuosine-tRNA galactosyltransferase from Rattus norvegicus (Rat).